The primary structure comprises 117 residues: Hydrogenase maturation factor HypA (117 aa).

H2 contacts Ni(2+). 4 residues coordinate Zn(2+): C73, C76, C89, and C92.

It belongs to the HypA/HybF family.

Involved in the maturation of [NiFe] hydrogenases. Required for nickel insertion into the metal center of the hydrogenase. In Chlorobium luteolum (strain DSM 273 / BCRC 81028 / 2530) (Pelodictyon luteolum), this protein is Hydrogenase maturation factor HypA.